The sequence spans 428 residues: MSMGILDELDWRGLIAQSTDRETLANDLANGPMTVYSGFDPTAPSLHAGHLVPLLTLRRFQRAGHRPIVLAGGATGMIGDPRDTGERTLNTADTVADWAGRIRGQLERFVEFDDTPTGAIVENNLNWTGRLSAIEFLRDLGKYFSVNVMLDRETVRRRLEGDGISYTEFSYMLLQANDFVELHQRYGCALQIGGSDQWGNIVAGARLVRQKLGATVHAMTTPLVTDSEGKKFGKSTGGGNLWLDPEMTSPYAWYQYFVNTADADVIGYLRWFTFLSADEIAELEDATQNRAHERAAQKRLARELTTLVHGEGATTAVELASQALFGRAELADLDESTLGAALREASNGQVAELKPGGPDSIVDLLVETGLAASKGAARRNVAEGGVYVNNIRIESDEWIPQHSDFLHERWLVLRRGKRHIAGVERVGA.

Tyrosine 36 lines the L-tyrosine pocket. The 'HIGH' region signature appears at 41–50; the sequence is PTAPSLHAGH. Positions 171 and 175 each coordinate L-tyrosine. Residues 231–235 carry the 'KMSKS' region motif; the sequence is KFGKS. Lysine 234 contacts ATP. The S4 RNA-binding domain occupies 359-416; the sequence is DSIVDLLVETGLAASKGAARRNVAEGGVYVNNIRIESDEWIPQHSDFLHERWLVLRRG.

This sequence belongs to the class-I aminoacyl-tRNA synthetase family. TyrS type 1 subfamily. In terms of assembly, homodimer.

It is found in the cytoplasm. The enzyme catalyses tRNA(Tyr) + L-tyrosine + ATP = L-tyrosyl-tRNA(Tyr) + AMP + diphosphate + H(+). In terms of biological role, catalyzes the attachment of tyrosine to tRNA(Tyr) in a two-step reaction: tyrosine is first activated by ATP to form Tyr-AMP and then transferred to the acceptor end of tRNA(Tyr). This chain is Tyrosine--tRNA ligase, found in Mycolicibacterium fortuitum (Mycobacterium fortuitum).